The chain runs to 241 residues: MSTNPKPAFRRILLKLSGEALMGSEGFGIDPSVLDRMAQEIKELVELGIQVGVVIGGGNLFRGEGLAKAGMNRVVGDHMGMLATVMNGLAMRDALHRAYVNARLMSAIPLKGVCDDYNWAEAISLLKSGRVVIFAAGTGNPFCTTDSAACLRGIEIEADVVLKGTKVDGVYSADPMKDPEAVKYDELSYAEVLDKELKVMDLSAFTMARDHDMPILVFNMNKPGALRRVIMGEGEGTIIKK.

15-18 (KLSG) is an ATP binding site. The interval 23-28 (GSEGFG) is involved in allosteric activation by GTP. Glycine 57 contributes to the UMP binding site. Glycine 58 and arginine 62 together coordinate ATP. UMP-binding positions include aspartate 77 and 138–145 (TGNPFCTT). ATP is bound by residues threonine 165, tyrosine 171, and aspartate 174.

This sequence belongs to the UMP kinase family. As to quaternary structure, homohexamer.

It is found in the cytoplasm. The enzyme catalyses UMP + ATP = UDP + ADP. It functions in the pathway pyrimidine metabolism; CTP biosynthesis via de novo pathway; UDP from UMP (UMPK route): step 1/1. With respect to regulation, allosterically activated by GTP. Inhibited by UTP. Functionally, catalyzes the reversible phosphorylation of UMP to UDP. The chain is Uridylate kinase from Shewanella amazonensis (strain ATCC BAA-1098 / SB2B).